We begin with the raw amino-acid sequence, 305 residues long: Ribonuclease BN (305 aa).

Zn(2+) contacts are provided by H64, H66, D68, H69, H141, D212, and H270. The active-site Proton acceptor is D68.

This sequence belongs to the RNase Z family. RNase BN subfamily. As to quaternary structure, homodimer. Zn(2+) is required as a cofactor.

In terms of biological role, zinc phosphodiesterase, which has both exoribonuclease and endoribonuclease activities. The sequence is that of Ribonuclease BN from Citrobacter koseri (strain ATCC BAA-895 / CDC 4225-83 / SGSC4696).